Here is a 468-residue protein sequence, read N- to C-terminus: H(+)/Cl(-) exchange transporter ClcA (468 aa).

At 1–30 (MSTRETFKISLLAKMPKDVINQFLSKDKTP) the chain is on the cytoplasmic side. Residues 31–67 (FSVLFLSLLVGILAGLVGTYFEQAVHLVSETRTDWLK) traverse the membrane as a helical segment. Residues 68–74 (SEIGSFL) are Periplasmic-facing. Residues 75-98 (PLWLAAFLISAFLAFIGYFLVHRF) form a helical membrane-spanning segment. Residues 104 to 108 (GSGIP) carry the Selectivity filter part_1 motif. Serine 105 is a chloride binding site. The segment at residues 107-114 (IPEIEGAM) is an intramembrane region (helical). Over 115 to 121 (DGMRPVR) the chain is Cytoplasmic. Transmembrane regions (helical) follow at residues 122 to 139 (WWRV…ALGS) and 146 to 164 (EGPT…SDIF). A Selectivity filter part_2 motif is present at residues 144–148 (GREGP). Residues 165–174 (RVKNEDTRHS) are Cytoplasmic-facing. 2 intramembrane regions (helical) span residues 175–187 (LLAA…LAAA) and 191–199 (PLAGIMFVI). Over 200–212 (EEMRPQFRYTLIS) the chain is Cytoplasmic. Residues 213–230 (VRAVIISAVAANIVFRVI) form a helical membrane-spanning segment. Over 231–250 (NGQDAVITMPQYDAPELSTL) the chain is Periplasmic. The helical transmembrane segment at 251 to 279 (GLFLLLGALFGVFGVLFNYLITLAQDLFV) threads the bilayer. Residues 280 to 285 (KFHRND) lie on the Cytoplasmic side of the membrane. Residues 286–307 (RKRYLLTGSMIGGCFGLLLLYV) form a helical membrane-spanning segment. The Periplasmic portion of the chain corresponds to 308 to 327 (PELTGGGISLIPTITNGGYG). A run of 2 helical transmembrane segments spans residues 328 to 347 (AGIL…LCFG) and 353 to 374 (GIFA…LIAK). The Selectivity filter part_3 motif lies at 353-357 (GIFAP). The chloride site is built by isoleucine 354 and phenylalanine 355. The Periplasmic portion of the chain corresponds to 375 to 384 (MWFPELNIEP). An intramembrane region (helical) is located at residues 385-399 (GMFAIAGMGALFAAT). Residues 400–402 (VRA) constitute an intramembrane region (note=Loop between two helices). Residues 403–414 (PITGILLVIEMT) constitute an intramembrane region (helical). An intramembrane region (note=Loop between two helices) is located at residues 415-419 (NNYHL). The chain crosses the membrane as a helical span at residues 420–436 (ILPLIITSLGAVIFAQL). Topologically, residues 437-468 (LGGQPIYSQLLHRTLKNQKLQQQDLPPQSPNS) are cytoplasmic. Residue tyrosine 443 coordinates chloride.

The protein belongs to the chloride channel (TC 2.A.49) family. ClcA subfamily. Homodimer.

Its subcellular location is the cell inner membrane. The enzyme catalyses 2 chloride(in) + H(+)(out) = 2 chloride(out) + H(+)(in). Functionally, proton-coupled chloride transporter. Functions as antiport system and exchanges two chloride ions for 1 proton. Probably acts as an electrical shunt for an outwardly-directed proton pump that is linked to amino acid decarboxylation, as part of the extreme acid resistance (XAR) response. This Vibrio cholerae serotype O1 (strain ATCC 39315 / El Tor Inaba N16961) protein is H(+)/Cl(-) exchange transporter ClcA.